The following is a 428-amino-acid chain: Bifunctional IPC transferase and DIPP synthase (428 aa).

The mobA-like NTP transferase stretch occupies residues 2 to 227 (VETAVILAGG…KAKKYLVKTA (226 aa)). Residues 8–10 (LAG), Lys25, Glu80, and Glu116 each bind CTP. Mg(2+) is bound at residue Glu116. The CDP-alcohol phosphatidyltransferases stretch occupies residues 228–425 (IKGVGDGFIS…LTIYLVWKKK (198 aa)). A run of 3 helical transmembrane segments spans residues 266-286 (FLLGMFSALVAYFSPALGGIL), 336-356 (PSWDFMPWVFAALFGSVMVSY), and 389-409 (MIMIFTILGWIKALFVVLAII).

The protein in the N-terminal section; belongs to the MobA family. In the C-terminal section; belongs to the CDP-alcohol phosphatidyltransferase class-I family. Requires Mg(2+) as cofactor.

It localises to the membrane. The catalysed reaction is 1D-myo-inositol 3-phosphate + CTP + H(+) = CDP-1L-myo-inositol + diphosphate. It carries out the reaction CDP-1L-myo-inositol + 1D-myo-inositol 3-phosphate = bis(1L-myo-inositol) 3,1'-phosphate 1-phosphate + CMP + H(+). Functionally, involved in biosynthesis of di-myo-inositol phosphate (DIP), a widespread organic solute in microorganisms adapted to hot environments. Catalyzes the condensation of CTP and L-myo-inositol-1-phosphate into CDP-L-myo-inositol, as well as the biosynthesis of di-myo-inositol-1,3'-phosphate-1'-phosphate (DIPP) from CDP-L-myo-inositol and L-myo-inositol-1-phosphate. The sequence is that of Bifunctional IPC transferase and DIPP synthase (spsI) from Aquifex aeolicus (strain VF5).